Here is a 64-residue protein sequence, read N- to C-terminus: Large ribosomal subunit protein bL35 (64 aa).

Belongs to the bacterial ribosomal protein bL35 family.

The sequence is that of Large ribosomal subunit protein bL35 from Vibrio parahaemolyticus serotype O3:K6 (strain RIMD 2210633).